The primary structure comprises 37 residues: Photosystem I reaction center subunit VIII (37 aa).

Residues 7 to 27 (LPAIFVPLVGLVFPAIAMVSL) form a helical membrane-spanning segment.

Belongs to the PsaI family.

Its subcellular location is the plastid. It localises to the chloroplast thylakoid membrane. Functionally, may help in the organization of the PsaL subunit. This is Photosystem I reaction center subunit VIII from Morus indica (Mulberry).